The primary structure comprises 316 residues: MTETFQHISVLLNESIDGLAIKPDGIYIDGTFGRGGHSRTILSKLGPNGRLYSIDRDPQAIAEAGKIDDPRFTIIHGPFSGMAQYAEEYDLVGKVDGVLLDLGVSSPQLDDAERGFSFMKDGPLDMRMDPTSGIPVSQWLMEADLDDITWVIREFGEDKHARRIARAIVEYRENEENEPMVRTGQLAKLISEAAPKSFKEKKHPATRAFQAFRIYINSELEEIDTALKGAARILAPEGRLSVISFHSLEDRMVKRFIRKESKGPEVPHGIPLTEAQIKELGSANMKTVGKAIKPSKQEIDMNPRSRSSVLRIAEKL.

Residues 35-37 (GGH), Asp-55, Phe-79, Asp-101, and Gln-108 contribute to the S-adenosyl-L-methionine site.

It belongs to the methyltransferase superfamily. RsmH family.

It is found in the cytoplasm. It catalyses the reaction cytidine(1402) in 16S rRNA + S-adenosyl-L-methionine = N(4)-methylcytidine(1402) in 16S rRNA + S-adenosyl-L-homocysteine + H(+). Its function is as follows. Specifically methylates the N4 position of cytidine in position 1402 (C1402) of 16S rRNA. This chain is Ribosomal RNA small subunit methyltransferase H, found in Vibrio parahaemolyticus serotype O3:K6 (strain RIMD 2210633).